We begin with the raw amino-acid sequence, 549 residues long: Cilia- and flagella-associated protein 45 (549 aa).

A disordered region spans residues 1 to 29 (MPLSPAGVLSSTSTASNRSRNRPRYRTKA). 3 coiled-coil regions span residues 119–232 (REEL…MMEV), 259–393 (IVEQ…KRNQ), and 434–522 (AVQV…KIEE). Residues 388-416 (RAKRNQEVADREWRRKEKENAQKKMETEA) are disordered.

It belongs to the CFAP45 family. Microtubule inner protein component of sperm flagellar doublet microtubules. Interacts with AK8; dimerization with AK8 may create a cavity at the interface of the dimer that can accommodate AMP. Interacts with CFAP52. Interacts with ENKUR. Directly interacts with DNALI1. Interacts with DNAH11. Interacts with DNAI1. In terms of tissue distribution, expressed in respiratory cells (at protein level).

Its subcellular location is the cytoplasm. It is found in the cytoskeleton. The protein localises to the cilium axoneme. It localises to the flagellum axoneme. The protein resides in the cell projection. Its subcellular location is the cilium. It is found in the flagellum. Its function is as follows. Microtubule inner protein (MIP) part of the dynein-decorated doublet microtubules (DMTs) in cilia axoneme, which is required for motile cilia beating. It is an AMP-binding protein that may facilitate dynein ATPase-dependent ciliary and flagellar beating via adenine nucleotide homeostasis. May function as a donor of AMP to AK8 and hence promote ADP production. This is Cilia- and flagella-associated protein 45 (CFAP45) from Sus scrofa (Pig).